Consider the following 244-residue polypeptide: Phosphoadenosine 5'-phosphosulfate reductase (244 aa).

The active-site Nucleophile; cysteine thiosulfonate intermediate is the Cys-239.

Belongs to the PAPS reductase family. CysH subfamily.

Its subcellular location is the cytoplasm. It catalyses the reaction [thioredoxin]-disulfide + sulfite + adenosine 3',5'-bisphosphate + 2 H(+) = [thioredoxin]-dithiol + 3'-phosphoadenylyl sulfate. Its pathway is sulfur metabolism; hydrogen sulfide biosynthesis; sulfite from sulfate: step 3/3. Its function is as follows. Catalyzes the formation of sulfite from phosphoadenosine 5'-phosphosulfate (PAPS) using thioredoxin as an electron donor. The protein is Phosphoadenosine 5'-phosphosulfate reductase of Yersinia enterocolitica serotype O:8 / biotype 1B (strain NCTC 13174 / 8081).